The chain runs to 967 residues: Probable helicase DDB_G0274399 (967 aa).

Residues 161-192 (EMTDDEDTAPTSAATHVGAPTKSTTTTTTTTT) form a disordered region. 357 to 364 (GPPGTGKT) contributes to the ATP binding site. Disordered stretches follow at residues 529 to 553 (SAIP…QDTS) and 892 to 967 (QKQK…RTRR). The stretch at 890-949 (NLQKQKDIEKRKKQHKRQKQKSKENDKKKQLKKRKELNNNDNNNNNKESSNKEVQEITNA) forms a coiled coil. Basic residues predominate over residues 900 to 909 (RKKQHKRQKQ). Low complexity predominate over residues 928–937 (NNDNNNNNKE).

It belongs to the DNA2/NAM7 helicase family.

The protein localises to the nucleus. The chain is Probable helicase DDB_G0274399 from Dictyostelium discoideum (Social amoeba).